A 965-amino-acid chain; its full sequence is Valine--tRNA ligase (965 aa).

Over residues 1–12 (MEKTPATQTQAE) the composition is skewed to polar residues. Positions 1–23 (MEKTPATQTQAEPSLDKTYNPKE) are disordered. A 'HIGH' region motif is present at residues 56-66 (PNVTGSLHMGH). The short motif at 568–572 (KMSKS) is the 'KMSKS' region element. ATP is bound at residue Lys-571. Residues 893 to 960 (MAGLVDKEAE…SKEKLLAQKE (68 aa)) adopt a coiled-coil conformation.

This sequence belongs to the class-I aminoacyl-tRNA synthetase family. ValS type 1 subfamily. In terms of assembly, monomer.

The protein resides in the cytoplasm. It carries out the reaction tRNA(Val) + L-valine + ATP = L-valyl-tRNA(Val) + AMP + diphosphate. Its function is as follows. Catalyzes the attachment of valine to tRNA(Val). As ValRS can inadvertently accommodate and process structurally similar amino acids such as threonine, to avoid such errors, it has a 'posttransfer' editing activity that hydrolyzes mischarged Thr-tRNA(Val) in a tRNA-dependent manner. The sequence is that of Valine--tRNA ligase from Photorhabdus laumondii subsp. laumondii (strain DSM 15139 / CIP 105565 / TT01) (Photorhabdus luminescens subsp. laumondii).